Consider the following 304-residue polypeptide: ATP phosphoribosyltransferase (304 aa).

The protein belongs to the ATP phosphoribosyltransferase family. Long subfamily. It depends on Mg(2+) as a cofactor.

The protein localises to the cytoplasm. It carries out the reaction 1-(5-phospho-beta-D-ribosyl)-ATP + diphosphate = 5-phospho-alpha-D-ribose 1-diphosphate + ATP. It functions in the pathway amino-acid biosynthesis; L-histidine biosynthesis; L-histidine from 5-phospho-alpha-D-ribose 1-diphosphate: step 1/9. With respect to regulation, feedback inhibited by histidine. Catalyzes the condensation of ATP and 5-phosphoribose 1-diphosphate to form N'-(5'-phosphoribosyl)-ATP (PR-ATP). Has a crucial role in the pathway because the rate of histidine biosynthesis seems to be controlled primarily by regulation of HisG enzymatic activity. The protein is ATP phosphoribosyltransferase of Xylella fastidiosa (strain M12).